A 250-amino-acid polypeptide reads, in one-letter code: Probable replication-associated protein repA2 (250 aa).

Belongs to the IncFII RepA family.

In terms of biological role, this protein is essential for plasmid replication; it is involved in copy control functions. This Buchnera aphidicola subsp. Schizaphis graminum (strain Sg) protein is Probable replication-associated protein repA2 (repA2).